We begin with the raw amino-acid sequence, 295 residues long: Light-independent protochlorophyllide reductase iron-sulfur ATP-binding protein (295 aa).

ATP is bound by residues 39–44 (GIGKST) and K68. Residue S43 coordinates Mg(2+). The [4Fe-4S] cluster site is built by C124 and C158. 209-210 (NR) serves as a coordination point for ATP.

This sequence belongs to the NifH/BchL/ChlL family. In terms of assembly, homodimer. Protochlorophyllide reductase is composed of three subunits; ChlL, ChlN and ChlB. Requires [4Fe-4S] cluster as cofactor.

It carries out the reaction chlorophyllide a + oxidized 2[4Fe-4S]-[ferredoxin] + 2 ADP + 2 phosphate = protochlorophyllide a + reduced 2[4Fe-4S]-[ferredoxin] + 2 ATP + 2 H2O. It functions in the pathway porphyrin-containing compound metabolism; chlorophyll biosynthesis (light-independent). Its function is as follows. Component of the dark-operative protochlorophyllide reductase (DPOR) that uses Mg-ATP and reduced ferredoxin to reduce ring D of protochlorophyllide (Pchlide) to form chlorophyllide a (Chlide). This reaction is light-independent. The L component serves as a unique electron donor to the NB-component of the complex, and binds Mg-ATP. This is Light-independent protochlorophyllide reductase iron-sulfur ATP-binding protein from Prochlorococcus marinus (strain MIT 9301).